Here is a 1019-residue protein sequence, read N- to C-terminus: Pleckstrin homology domain-containing family M member 2 (1019 aa).

M1 bears the N-acetylmethionine mark. Residues M1–L310 form an interaction with KIF5B region. The RUN domain occupies R36–P158. Disordered regions lie at residues S230–L458, S471–Q525, and Q557–V581. Composition is skewed to polar residues over residues D243 to F272 and T279 to T291. Over residues V315–S327 the composition is skewed to basic residues. A compositionally biased stretch (polar residues) spans L417–C427. Residue S441 is modified to Phosphoserine. Positions P516–Q525 are enriched in basic and acidic residues. The segment at P762 to P885 is interaction with sifA. The PH domain maps to T771–S873.

As to quaternary structure, interacts with KLC2 (via TPR repeats). Interacts with KIF5B. Interacts with BORCS5. Interacts (via RUN domain) with ARL8B (GTP-bound form); PLEKHM1 and PLEKHM2 compete for interaction with ARL8B. Interacts with ARL8A. (Microbial infection) Interacts with the S.typhimurium sifA protein; required for S.typhimurium infection.

The protein resides in the cytoplasm. It is found in the lysosome membrane. Functionally, plays a role in lysosomes movement and localization at the cell periphery acting as an effector of ARL8B. Required for ARL8B to exert its effects on lysosome location, recruits kinesin-1 to lysosomes and hence direct their movement toward microtubule plus ends. Binding to ARL8B provides a link from lysosomal membranes to plus-end-directed motility. Critical factor involved in NK cell-mediated cytotoxicity. Drives the polarization of cytolytic granules and microtubule-organizing centers (MTOCs) toward the immune synapse between effector NK lymphocytes and target cells. Required for maintenance of the Golgi apparatus organization. May play a role in membrane tubulation. The polypeptide is Pleckstrin homology domain-containing family M member 2 (Homo sapiens (Human)).